The primary structure comprises 328 residues: Ubiquitin-conjugating enzyme E2 Z (328 aa).

One can recognise a UBC core domain in the interval 71–225 (QCILRIKRDI…IRHETMRVAV (155 aa)). Catalysis depends on cysteine 160, which acts as the Glycyl thioester intermediate. A disordered region spans residues 295–328 (RLREKCPPEDNDGDSDSDTSSSGTDPDSQGSSQP). Over residues 312-328 (DTSSSGTDPDSQGSSQP) the composition is skewed to low complexity.

The protein belongs to the ubiquitin-conjugating enzyme family.

It is found in the cytoplasm. The protein resides in the nucleus. It carries out the reaction S-ubiquitinyl-[E1 ubiquitin-activating enzyme]-L-cysteine + [E2 ubiquitin-conjugating enzyme]-L-cysteine = [E1 ubiquitin-activating enzyme]-L-cysteine + S-ubiquitinyl-[E2 ubiquitin-conjugating enzyme]-L-cysteine.. Its pathway is protein modification; protein ubiquitination. Its function is as follows. Catalyzes the covalent attachment of ubiquitin to other proteins. May be involved in apoptosis regulation. This is Ubiquitin-conjugating enzyme E2 Z (ube2z) from Danio rerio (Zebrafish).